The sequence spans 441 residues: ATP-dependent RNA helicase sub2 (441 aa).

Residues 19-29 are compositionally biased toward low complexity; that stretch reads DAAATTAAPAA. A disordered region spans residues 19 to 43; it reads DAAATTAAPAANGAQDKKGDLTVSG. Positions 58 to 86 match the Q motif motif; sequence TGFRDFLLKGELLRAITDCGFEHPSEVQQ. Residues 89–264 form the Helicase ATP-binding domain; sequence IPTAILNVDV…KKFMRNPLEV (176 aa). ATP is bound at residue 102-109; the sequence is AKSGLGKT. The short motif at 211–214 is the DEAD box element; it reads DECD. The Helicase C-terminal domain occupies 276-437; the sequence is GLQQYYIKLS…EYPEGGVDSS (162 aa).

This sequence belongs to the DEAD box helicase family. DECD subfamily.

It is found in the nucleus. It catalyses the reaction ATP + H2O = ADP + phosphate + H(+). ATP-binding RNA helicase involved in transcription elongation and required for the export of mRNA out of the nucleus. SUB2 also plays a role in pre-mRNA splicing and spliceosome assembly. May be involved in rDNA and telomeric silencing, and maintenance of genome integrity. This Aspergillus clavatus (strain ATCC 1007 / CBS 513.65 / DSM 816 / NCTC 3887 / NRRL 1 / QM 1276 / 107) protein is ATP-dependent RNA helicase sub2 (sub2).